Here is a 456-residue protein sequence, read N- to C-terminus: Exodeoxyribonuclease 7 large subunit (456 aa).

The segment at 1–103 (MLPSQSPAIF…DYQIIVESMQ (103 aa)) is binds ssDNA, also required to bind the small subunit.

This sequence belongs to the XseA family. As to quaternary structure, heterooligomer composed of two different subunits with an approximate ratio of 4:1 for small to large subunit. Also estimated to have a 6:1 ration for small to large subunits. Requires Does not require a metal cofactor. as cofactor.

It is found in the cytoplasm. It carries out the reaction Exonucleolytic cleavage in either 5'- to 3'- or 3'- to 5'-direction to yield nucleoside 5'-phosphates.. Its function is as follows. Bidirectionally degrades single-stranded DNA into large acid-insoluble oligonucleotides, which are then degraded further into small acid-soluble oligonucleotides. It can degrade 3' or 5' ss regions extending from the termini of duplex DNA molecules and displaced ss regions. It can also excise thymine dimers in vitro. ssDNA-binding requires both subunits. Required for production of the mature 5'-end of retron Ec78 or Ec83 msDNA. Overproduction of this subunit in the absence of an equivalent quantity of the small subunit is toxic, causing cell elongation and chromosome fragmentation or loss; its toxicity is mostly suppressed by RecA. This is Exodeoxyribonuclease 7 large subunit from Escherichia coli (strain K12).